The primary structure comprises 238 residues: Ribosomal RNA small subunit methyltransferase G (238 aa).

Residues Gly75, Leu80, 126–127 (AE), and Arg142 contribute to the S-adenosyl-L-methionine site.

The protein belongs to the methyltransferase superfamily. RNA methyltransferase RsmG family.

It localises to the cytoplasm. Its function is as follows. Specifically methylates the N7 position of guanine in position 518 of 16S rRNA. The sequence is that of Ribosomal RNA small subunit methyltransferase G from Streptomyces avermitilis (strain ATCC 31267 / DSM 46492 / JCM 5070 / NBRC 14893 / NCIMB 12804 / NRRL 8165 / MA-4680).